The following is an 84-amino-acid chain: Seminal ribonuclease (84 aa).

Cystine bridges form between Cys10/Cys65, Cys28/Cys80, and Cys35/Cys42. Substrate-binding positions include 11–15, Lys36, and Arg55; that span reads KPVNT.

Belongs to the pancreatic ribonuclease family. As to quaternary structure, homodimer; disulfide-linked.

Its subcellular location is the secreted. It carries out the reaction an [RNA] containing cytidine + H2O = an [RNA]-3'-cytidine-3'-phosphate + a 5'-hydroxy-ribonucleotide-3'-[RNA].. It catalyses the reaction an [RNA] containing uridine + H2O = an [RNA]-3'-uridine-3'-phosphate + a 5'-hydroxy-ribonucleotide-3'-[RNA].. The sequence is that of Seminal ribonuclease (SRN) from Giraffa camelopardalis (Giraffe).